The following is a 351-amino-acid chain: Modulator of apoptosis 1 (351 aa).

Residues 49-52 (YRLL) carry the LIR motif. Residues 120–127 (LTRALAHE) form a BH3-like region. The segment at 202 to 205 (KRRR) is RASSF1-binding.

This sequence belongs to the PNMA family. As to quaternary structure, homodimer. Under normal circumstances, held in an inactive conformation by an intramolecular interaction. Interacts with BAX. Binding to RASSF1 isoform A (RASSF1A) relieves this inhibitory interaction and allows further binding to BAX. Also binds to BCL2 and BCLX. Recruited to the TNFRSF1A and TNFRSF10A complexes in response to their respective cognate ligand, after internalization. Interacts with TRIM39. Interacts with RASSF6. Interacts with ATG8 proteins MAP1LC3A, MAP1LC3B and MAP1LC3C. Does not interact with ATG8 proteins GABARAPL1, GABARAPL2 and GABARAP. Interacts with SQSTM1; promoting dissociation of SQSTM1 inclusion bodies that sequester KEAP1. Post-translationally, ubiquitinated and degraded during mitotic exit by APC/C-Cdh1, this modification is inhibited by TRIM39.

It is found in the cytoplasm. The protein localises to the cytosol. The protein resides in the mitochondrion outer membrane. Its subcellular location is the extracellular vesicle membrane. Its function is as follows. Retrotransposon-derived protein that forms virion-like capsids. Acts as an effector of BAX during apoptosis: enriched at outer mitochondria membrane and associates with BAX upon induction of apoptosis, facilitating BAX-dependent mitochondrial outer membrane permeabilization and apoptosis. Required for death receptor-dependent apoptosis. When associated with RASSF1, promotes BAX conformational change and translocation to mitochondrial membranes in response to TNF and TNFSF10 stimulation. Also promotes autophagy: promotes phagophore closure via association with ATG8 proteins. Acts as an inhibitor of the NFE2L2/NRF2 pathway via interaction with SQSTM1: interaction promotes dissociation of SQSTM1 inclusion bodies that sequester KEAP1, relieving inactivation of the BCR(KEAP1) complex. In Macaca fascicularis (Crab-eating macaque), this protein is Modulator of apoptosis 1.